The sequence spans 475 residues: Ribulose bisphosphate carboxylase large chain (475 aa).

Residues 1-2 constitute a propeptide that is removed on maturation; sequence MS. Pro-3 is subject to N-acetylproline. At Lys-14 the chain carries N6,N6,N6-trimethyllysine. 2 residues coordinate substrate: Asn-123 and Thr-173. Residue Lys-175 is the Proton acceptor of the active site. Lys-177 contributes to the substrate binding site. 3 residues coordinate Mg(2+): Lys-201, Asp-203, and Glu-204. Lys-201 is modified (N6-carboxylysine). His-294 serves as the catalytic Proton acceptor. Substrate-binding residues include Arg-295, His-327, and Ser-379.

The protein belongs to the RuBisCO large chain family. Type I subfamily. As to quaternary structure, heterohexadecamer of 8 large chains and 8 small chains; disulfide-linked. The disulfide link is formed within the large subunit homodimers. Mg(2+) is required as a cofactor. The disulfide bond which can form in the large chain dimeric partners within the hexadecamer appears to be associated with oxidative stress and protein turnover.

It is found in the plastid. Its subcellular location is the chloroplast. It carries out the reaction 2 (2R)-3-phosphoglycerate + 2 H(+) = D-ribulose 1,5-bisphosphate + CO2 + H2O. The enzyme catalyses D-ribulose 1,5-bisphosphate + O2 = 2-phosphoglycolate + (2R)-3-phosphoglycerate + 2 H(+). RuBisCO catalyzes two reactions: the carboxylation of D-ribulose 1,5-bisphosphate, the primary event in carbon dioxide fixation, as well as the oxidative fragmentation of the pentose substrate in the photorespiration process. Both reactions occur simultaneously and in competition at the same active site. The polypeptide is Ribulose bisphosphate carboxylase large chain (Pinus radiata (Monterey pine)).